The chain runs to 669 residues: DNA polymerase epsilon subunit B (669 aa).

The segment at 96–115 is disordered; that stretch reads QISTRNGSADNLAKKAERSD.

This sequence belongs to the DNA polymerase epsilon subunit B family. Heterotetramer. Consists of four subunits: POL2, DPB2, DPB3 and DPB4.

The protein resides in the nucleus. As accessory component of the DNA polymerase epsilon (DNA polymerase II) participates in chromosomal DNA replication. In Debaryomyces hansenii (strain ATCC 36239 / CBS 767 / BCRC 21394 / JCM 1990 / NBRC 0083 / IGC 2968) (Yeast), this protein is DNA polymerase epsilon subunit B (DPB2).